Reading from the N-terminus, the 200-residue chain is Transcription elongation factor A protein-like 3 (200 aa).

Residues 1–200 (MEKPYNKNEG…QRGLHDIPYL (200 aa)) form a disordered region. The span at 20–36 (DEVEPDDEGKSDEEEKP) shows a compositional bias: acidic residues. At Ser-30 the chain carries Phosphoserine. A compositionally biased stretch (basic and acidic residues) spans 37–50 (DVEGKTECEGKRED). Over residues 51-64 (EGEPGDEGQLEDEG) the composition is skewed to acidic residues. Ser-65 bears the Phosphoserine mark. Basic and acidic residues-rich tracts occupy residues 65–80 (SQEK…KPQG), 96–107 (AAEKRPAEDYVP), and 115–154 (DRGT…EELR).

The protein belongs to the TFS-II family. TFA subfamily.

Its subcellular location is the nucleus. Its function is as follows. May be involved in transcriptional regulation. This chain is Transcription elongation factor A protein-like 3 (TCEAL3), found in Homo sapiens (Human).